A 254-amino-acid chain; its full sequence is Type III pantothenate kinase (254 aa).

ATP is bound at residue 13–20; sequence MIGNTRQH. Substrate contacts are provided by residues Tyr84 and 88 to 91; that span reads GLDR. Asp90 acts as the Proton acceptor in catalysis. Asp110 provides a ligand contact to K(+). Thr113 provides a ligand contact to ATP. Thr166 provides a ligand contact to substrate.

This sequence belongs to the type III pantothenate kinase family. In terms of assembly, homodimer. NH4(+) serves as cofactor. It depends on K(+) as a cofactor.

The protein localises to the cytoplasm. The enzyme catalyses (R)-pantothenate + ATP = (R)-4'-phosphopantothenate + ADP + H(+). The protein operates within cofactor biosynthesis; coenzyme A biosynthesis; CoA from (R)-pantothenate: step 1/5. In terms of biological role, catalyzes the phosphorylation of pantothenate (Pan), the first step in CoA biosynthesis. This Thermosynechococcus vestitus (strain NIES-2133 / IAM M-273 / BP-1) protein is Type III pantothenate kinase.